We begin with the raw amino-acid sequence, 191 residues long: Calcium-activated potassium channel subunit beta-1 (191 aa).

At 1 to 18 (MGKKLVMAQKRGETRALC) the chain is on the cytoplasmic side. Residues 19–39 (LGVAMVVCAAITYYILGTTVL) form a helical membrane-spanning segment. The Extracellular portion of the chain corresponds to 40 to 155 (PLYQKSVWTQ…VVYQRLYGPQ (116 aa)). Asn-80 and Asn-142 each carry an N-linked (GlcNAc...) asparagine glycan. A helical transmembrane segment spans residues 156–176 (ILLFSFFWPTFLLTGGLLIIA). Residues 177–191 (MVKLNRSLSVLAAQK) lie on the Cytoplasmic side of the membrane.

It belongs to the KCNMB (TC 8.A.14.1) family. KCNMB1 subfamily. In terms of assembly, interacts with KCNMA1 tetramer. There are probably 4 molecules of KCMNB1 per KCNMA1 tetramer. N-glycosylated. In terms of tissue distribution, weakly expressed. In brain, it is expressed in a few discrete populations of neurons that also express KCNMA1.

The protein localises to the membrane. Functionally, regulatory subunit of the calcium activated potassium KCNMA1 (maxiK) channel. Modulates the calcium sensitivity and gating kinetics of KCNMA1, thereby contributing to KCNMA1 channel diversity. Increases the apparent Ca(2+)/voltage sensitivity of the KCNMA1 channel. It also modifies KCNMA1 channel kinetics and alters its pharmacological properties. It slows down the activation and the deactivation kinetics of the channel. Acts as a negative regulator of smooth muscle contraction by enhancing the calcium sensitivity to KCNMA1. Its presence is also a requirement for internal binding of the KCNMA1 channel opener dehydrosoyasaponin I (DHS-1) triterpene glycoside and for external binding of the agonist hormone 17-beta-estradiol (E2). Increases the binding activity of charybdotoxin (CTX) toxin to KCNMA1 peptide blocker by increasing the CTX association rate and decreasing the dissociation rate. The chain is Calcium-activated potassium channel subunit beta-1 (Kcnmb1) from Rattus norvegicus (Rat).